We begin with the raw amino-acid sequence, 244 residues long: Ras-related protein Rab-12 (244 aa).

N-acetylmethionine is present on methionine 1. Over residues 1–10 (MDPGAALQRR) the composition is skewed to low complexity. A disordered region spans residues 1 to 37 (MDPGAALQRRAGGGGGLGAGSPALSGGQGRRRKQPPR). Residues serine 21 and serine 25 each carry the phosphoserine modification. GDP is bound at residue glycine 52. 5 residues coordinate GTP: glycine 52, valine 53, glycine 54, lysine 55, and threonine 56. GDP-binding residues include glycine 54, lysine 55, threonine 56, and serine 57. A Mg(2+)-binding site is contributed by threonine 56. 2 short sequence motifs (switch) span residues 65-79 (DTFC…GVDF) and 97-114 (DTAG…YYRS). Residues serine 73 and threonine 74 each contribute to the GTP site. Mg(2+)-binding residues include threonine 74 and aspartate 97. Glycine 100 is a GTP binding site. Serine 106 is subject to Phosphoserine; by LRRK2. GDP is bound by residues asparagine 155, lysine 156, aspartate 158, and cysteine 159. Asparagine 155, lysine 156, and aspartate 158 together coordinate GTP. The GTP site is built by serine 186, alanine 187, and lysine 188. GDP-binding residues include alanine 187 and lysine 188. Residues 225–244 (QPEPEIPPELPPPRPHVRCC) are disordered. Positions 228-238 (PEIPPELPPPR) are enriched in pro residues. S-geranylgeranyl cysteine attachment occurs at residues cysteine 243 and cysteine 244.

Belongs to the small GTPase superfamily. Rab family. In terms of assembly, interacts with RABIF. Interacts with OPTN. Interacts with LRRK2; interaction facilitates phosphorylation of Ser-106. Interacts with GDI1, GDI2, CHM and CHML; these interactions are disrupted by phosphorylation on Ser-106. Interacts with RILPL1 and RILPL2; these interactions are dependent on phosphorylation of Ser-106. It depends on Mg(2+) as a cofactor. In terms of processing, phosphorylation of Ser-106 in the switch II region by LRRK2 prevents the association of RAB regulatory proteins, including CHM, CHML and RAB GDP dissociation inhibitors GDI1 and GDI2.

The protein resides in the recycling endosome membrane. It is found in the lysosome membrane. It localises to the golgi apparatus membrane. Its subcellular location is the cytoplasmic vesicle. The protein localises to the autophagosome. The enzyme catalyses GTP + H2O = GDP + phosphate + H(+). With respect to regulation, regulated by guanine nucleotide exchange factors (GEFs) including DENND3 which promote the exchange of bound GDP for free GTP. Regulated by GTPase activating proteins (GAPs) which increase the GTP hydrolysis activity. Inhibited by GDP dissociation inhibitors (GDIs). Functionally, the small GTPases Rab are key regulators of intracellular membrane trafficking, from the formation of transport vesicles to their fusion with membranes. Rabs cycle between an inactive GDP-bound form and an active GTP-bound form that is able to recruit to membranes different sets of downstream effectors directly responsible for vesicle formation, movement, tethering and fusion. RAB12 may play a role in protein transport from recycling endosomes to lysosomes regulating, for instance, the degradation of the transferrin receptor. Involved in autophagy. The sequence is that of Ras-related protein Rab-12 from Homo sapiens (Human).